We begin with the raw amino-acid sequence, 461 residues long: MPVKVTMDKIVALAKNRGFVFPGSEIYGGLANTWDYGPLGVEMKNNIKRIWWKKFIQESPYNVGIDSAILMNREVWVASGHVASFSDPLMDCKECKSRFRADQLIEDYIKEKGLDISIEGWTNEQMMEFIKEHKVPCPKCGAHNFTEIRKFNLMFKTYVGVTEDSKSEVFLRPETAQGIFVNFKNVQRTSRKKIPFGIGQIGKSFRNEITPGNFIFRTREFEQMELEFFCKPGEDMEWFNYWRQFCMDWLVEFGLKRENLRFRDHKKEELSHYSTATTDIEYNFPFGWGELWGIANRTDYDLRQHMEHSGEDMTYTDPVTGEKYIPYCIEPSVGVDRLMLAFLVDAYDEEEVEGETRVVLRLHPAIAPVKVAVFPLSKKLNEAAYKIYLDLKKKFPAEYDESGSIGRRYRRQDEIGTPFCVTYDFDSENDHKVTIRDRDTMEQIRIDIDQVDKYLEEKLKF.

Substrate is bound by residues Arg100 and Glu174. ATP-binding positions include 206–208 (RNE), 216–221 (FRTREF), 290–291 (EL), and 334–337 (GVDR). A substrate-binding site is contributed by 221–225 (FEQME). 330-334 (EPSVG) lines the substrate pocket.

It belongs to the class-II aminoacyl-tRNA synthetase family. Homodimer.

The protein localises to the cytoplasm. It carries out the reaction tRNA(Gly) + glycine + ATP = glycyl-tRNA(Gly) + AMP + diphosphate. Catalyzes the attachment of glycine to tRNA(Gly). This chain is Glycine--tRNA ligase, found in Caldanaerobacter subterraneus subsp. tengcongensis (strain DSM 15242 / JCM 11007 / NBRC 100824 / MB4) (Thermoanaerobacter tengcongensis).